The following is a 131-amino-acid chain: MDSTHATKSCLLILLVALLCAGRAQGLQCYECYGVPIETSCPAVTCRASDGFCIAQNIELIEDSQRRKLKTRQCLSFCPAGVPIKDPNIRERTSCCSEDLCNAAVPTAGSTWTMAGVLLFSLSSVILQTLL.

An N-terminal signal peptide occupies residues 1-26; the sequence is MDSTHATKSCLLILLVALLCAGRAQG. The UPAR/Ly6 domain maps to 27–116; the sequence is LQCYECYGVP…TAGSTWTMAG (90 aa). 5 disulfides stabilise this stretch: Cys-29/Cys-53, Cys-32/Cys-41, Cys-46/Cys-74, Cys-78/Cys-95, and Cys-96/Cys-101. Residue Gly-109 is the site of GPI-anchor amidated glycine attachment. Positions 110–131 are cleaved as a propeptide — removed in mature form; it reads STWTMAGVLLFSLSSVILQTLL.

The protein resides in the cell membrane. This chain is Lymphocyte antigen 6C2 (Ly6c2), found in Mus musculus (Mouse).